We begin with the raw amino-acid sequence, 348 residues long: MLNLLQGCKDFLHLTLSNPEHLDPIAPQPLYGHTLVSLWDTGVLVFEPVDGNSHKDIVLSSGVHGNETAPIELCNGLIQDVLEGRLQVKERVLFLIGNPAAINNGTRIVDENMNRLFSGEHSRGPGLSNPERVRAKKLETYVTRFFEKGAEKGEGRQRIHYDLHTAIRGSKHEKFAIYPYRPGRAFSGEQIMFLAASGVDTVLFHHEPTTTFSYFSSELFRADAFTIELGKVYPMGQNDMSKFANTREMFKRLICAEPLELAPFDETQVNLYQVCRVINKEVDDFEFTFSTDVENFSAFPRGHVIARQGGKDILVEQEAEAVVFPNAKVPVGQRTVIMLVPAVNPHVE.

Residues His-64, Glu-67, and His-164 each contribute to the Zn(2+) site. Residue Glu-228 is part of the active site.

This sequence belongs to the AspA/AstE family. Succinylglutamate desuccinylase subfamily. Zn(2+) is required as a cofactor.

The enzyme catalyses N-succinyl-L-glutamate + H2O = L-glutamate + succinate. It participates in amino-acid degradation; L-arginine degradation via AST pathway; L-glutamate and succinate from L-arginine: step 5/5. Its function is as follows. Transforms N(2)-succinylglutamate into succinate and glutamate. The chain is Succinylglutamate desuccinylase from Shewanella amazonensis (strain ATCC BAA-1098 / SB2B).